A 406-amino-acid polypeptide reads, in one-letter code: Membrane protein UL43 homolog (406 aa).

10 helical membrane passes run 48–68 (LFLV…QYHV), 71–91 (AAVN…PTSV), 103–123 (CLQT…CPIS), 126–146 (LPFV…VAAV), 162–182 (IYFY…VILY), 188–208 (YEVL…VDAA), 266–286 (SVIP…SHII), 299–319 (LAVS…AVLY), 339–359 (IAVT…STVA), and 386–406 (VYHV…TYVS).

Belongs to the alphaherpesvirinae HHV-1 UL43 family.

Its subcellular location is the membrane. This Varicella-zoster virus (strain Dumas) (HHV-3) protein is Membrane protein UL43 homolog.